The following is a 430-amino-acid chain: Glutamate-1-semialdehyde 2,1-aminomutase (430 aa).

Lysine 265 carries the post-translational modification N6-(pyridoxal phosphate)lysine.

The protein belongs to the class-III pyridoxal-phosphate-dependent aminotransferase family. HemL subfamily. In terms of assembly, homodimer. Pyridoxal 5'-phosphate serves as cofactor.

The protein resides in the cytoplasm. The enzyme catalyses (S)-4-amino-5-oxopentanoate = 5-aminolevulinate. It participates in porphyrin-containing compound metabolism; protoporphyrin-IX biosynthesis; 5-aminolevulinate from L-glutamyl-tRNA(Glu): step 2/2. In Shewanella sp. (strain MR-7), this protein is Glutamate-1-semialdehyde 2,1-aminomutase.